The following is a 307-amino-acid chain: Heme A synthase (307 aa).

The Cytoplasmic segment spans residues 1–8; the sequence is MQHNRYLK. The chain crosses the membrane as a helical span at residues 9 to 29; that stretch reads WFAVAATVGMLLILLGGALVT. Topologically, residues 30-56 are extracellular; that stretch reads KTDSGLGCGRNWPDCNGSLIPKEITPE. A disulfide bond links C37 and C44. Residues 57–77 traverse the membrane as a helical segment; it reads VLIEFSHRLVTGVVSISILVL. E60 is a catalytic residue. Position 63 (H63) interacts with heme o. The Cytoplasmic segment spans residues 78–92; that stretch reads TVWTWRKLGHIREVK. A helical transmembrane segment spans residues 93 to 113; sequence LLGFLAMFFLIAQALIGAAQV. Residues 114–123 are Extracellular-facing; the sequence is LWGQGDFILA. A helical membrane pass occupies residues 124-144; it reads LHFGISLISFAAVLLLSMIVF. H125 contributes to the heme o binding site. Topologically, residues 145 to 161 are cytoplasmic; sequence EVDRKFDADNVFIGKKL. Residues 162–182 form a helical membrane-spanning segment; it reads RWHTIAVTIYSYLVVYTGALV. Residues 183–218 lie on the Extracellular side of the membrane; that stretch reads RHTDSSLICPDWPFCYNETPLASPNNMYEWVQMGHR. The cysteines at positions 191 and 197 are disulfide-linked. H217 contacts heme b. The helical transmembrane segment at 219–239 threads the bilayer; sequence LAVLIIFIWIAYITWHAVKEY. Residues 240–247 are Cytoplasmic-facing; the sequence is KNQRVVYY. Residues 248-268 form a helical membrane-spanning segment; the sequence is GWIIAFTIVFLQVIAGMLVVL. Topologically, residues 269-276 are extracellular; the sequence is TKLNLTVA. The chain crosses the membrane as a helical span at residues 277 to 297; it reads LMHSLLISLLFGLLCYMIMLV. H279 contributes to the heme b binding site. Residues 298-307 are Cytoplasmic-facing; it reads ARSNYNEKMK.

The protein belongs to the COX15/CtaA family. Type 1 subfamily. As to quaternary structure, interacts with CtaB. The cofactor is heme b.

It localises to the cell membrane. The catalysed reaction is Fe(II)-heme o + 2 A + H2O = Fe(II)-heme a + 2 AH2. It functions in the pathway porphyrin-containing compound metabolism; heme A biosynthesis; heme A from heme O: step 1/1. Functionally, catalyzes the conversion of heme O to heme A by two successive hydroxylations of the methyl group at C8. The first hydroxylation forms heme I, the second hydroxylation results in an unstable dihydroxymethyl group, which spontaneously dehydrates, resulting in the formyl group of heme A. The polypeptide is Heme A synthase (Lysinibacillus sphaericus (strain C3-41)).